The following is a 95-amino-acid chain: Small ribosomal subunit protein uS19 (95 aa).

The disordered stretch occupies residues 73-95 (EFSPTRTYRGHGADKNAKGSKKK).

Belongs to the universal ribosomal protein uS19 family.

Functionally, protein S19 forms a complex with S13 that binds strongly to the 16S ribosomal RNA. In Deinococcus radiodurans (strain ATCC 13939 / DSM 20539 / JCM 16871 / CCUG 27074 / LMG 4051 / NBRC 15346 / NCIMB 9279 / VKM B-1422 / R1), this protein is Small ribosomal subunit protein uS19.